Here is a 228-residue protein sequence, read N- to C-terminus: MEYIAEGFRAAMELLVSFDPQVYTIIFLSVFVSSTATAIAAAVSIPLGIFAGISNFRLKRLFSKVLYSLMSVPSVIVGLVVAIGLSRRGPLGFMQLLYTPTAMIIAQALLVFPLCLGLTYSLSKNRGSEIERIGKTLGAGKLQVIILIIRELKAELFINVVTTFSRAISEVGAVMIVGGNIKGHTRVITTSIAMLNSMGDYPMAIALGLVLLMISFAINAVIYSLQEE.

A run of 5 helical transmembrane segments spans residues 25–45 (IIFL…AVSI), 65–85 (VLYS…AIGL), 102–122 (AMII…TYSL), 144–164 (VIIL…VTTF), and 203–223 (MAIA…AVIY). The 197-residue stretch at 26-222 (IFLSVFVSST…MISFAINAVI (197 aa)) folds into the ABC transmembrane type-1 domain.

This sequence belongs to the binding-protein-dependent transport system permease family. As to quaternary structure, the complex is composed of two ATP-binding proteins (TupC), two transmembrane proteins (TupB) and a solute-binding protein (TupA).

It is found in the cell membrane. Functionally, part of an ABC transporter complex involved in tungstate uptake. Probably responsible for the translocation of the substrate across the membrane. This is Tungstate uptake system permease protein TupB from Peptoclostridium acidaminophilum (Eubacterium acidaminophilum).